Here is a 306-residue protein sequence, read N- to C-terminus: ORF-B protein (306 aa).

3 helical membrane-spanning segments follow: residues 92 to 112 (MIQW…FPFI), 120 to 140 (LTHL…VFGW), and 161 to 181 (VIEW…IVVS).

Interacts with host RACK1.

Its subcellular location is the host cytoplasm. The protein resides in the host cell membrane. The sequence is that of ORF-B protein from Sander vitreus (Walleye).